The primary structure comprises 502 residues: MTEIIQELDLNGEMLVRREKLAALRAKGNAFPNTFRRNALAQDLHTQYDEIESESLKTQGIEVKVAGRIMTRRVMGKATFITLQDMSGKIQLYVARDNLAEGVYTDDVGNWDLGDIVGVKGTLFKTKTNELTIRATEVHLLTKALRPLPNKFHGLSDQETRYRQRYLDLIANEDSRRTFIIRSKVIAGIREYFISKGFMEVETPMLQIIPGGASARPFITHHNALDVDMYLRIAPELYLKRLVVGGFERVFELNRNFRNEGVSIRHNPEFTMLEYYQAYADYHDLMDNTEELLRKLALDILGTTIVPYGDLKFDFGKPFERITMHEAILKYGAEQGIVKEDLYDFDRAVAVAQKLGIEVQKSWGLGSLVNAIFEEVAEHHLIQPTFLMAHPAEISPLARRNDENPDVTDRFELFIGGREIGNGFSELNDAEDQNERFDAQVAAKEAGDDEAMFKDEDFVTALEHGLPPTAGEGLGIDRLAMLFANANSIRDVILFPAMKTKS.

Positions 412 and 419 each coordinate Mg(2+).

This sequence belongs to the class-II aminoacyl-tRNA synthetase family. In terms of assembly, homodimer. Requires Mg(2+) as cofactor.

Its subcellular location is the cytoplasm. The enzyme catalyses tRNA(Lys) + L-lysine + ATP = L-lysyl-tRNA(Lys) + AMP + diphosphate. The protein is Lysine--tRNA ligase of Histophilus somni (strain 2336) (Haemophilus somnus).